A 343-amino-acid polypeptide reads, in one-letter code: Phosphoribosylformylglycinamidine cyclo-ligase (343 aa).

The protein belongs to the AIR synthase family.

Its subcellular location is the cytoplasm. It catalyses the reaction 2-formamido-N(1)-(5-O-phospho-beta-D-ribosyl)acetamidine + ATP = 5-amino-1-(5-phospho-beta-D-ribosyl)imidazole + ADP + phosphate + H(+). It participates in purine metabolism; IMP biosynthesis via de novo pathway; 5-amino-1-(5-phospho-D-ribosyl)imidazole from N(2)-formyl-N(1)-(5-phospho-D-ribosyl)glycinamide: step 2/2. This is Phosphoribosylformylglycinamidine cyclo-ligase from Staphylococcus epidermidis (strain ATCC 35984 / DSM 28319 / BCRC 17069 / CCUG 31568 / BM 3577 / RP62A).